We begin with the raw amino-acid sequence, 302 residues long: Serine/threonine-protein phosphatase alpha-2 isoform (302 aa).

Residues Asp-62, His-64, Asp-90, and Asn-122 each contribute to the Mn(2+) site. His-123 functions as the Proton donor in the catalytic mechanism. Residues His-171 and His-246 each coordinate Mn(2+).

It belongs to the PPP phosphatase family. PP-1 subfamily. As to quaternary structure, interacts with Nop17l. Interacts with uri; uri inhibits Pp1-87B phosphatase activity. Interacts with Rif1. Mn(2+) serves as cofactor.

The protein localises to the cytoplasm. It catalyses the reaction O-phospho-L-seryl-[protein] + H2O = L-seryl-[protein] + phosphate. It carries out the reaction O-phospho-L-threonyl-[protein] + H2O = L-threonyl-[protein] + phosphate. In terms of biological role, is essential for the regulation of mitotic chromosomal segregation as well as regulation of chromatin condensation during interphase. The sequence is that of Serine/threonine-protein phosphatase alpha-2 isoform (Pp1-87B) from Drosophila melanogaster (Fruit fly).